Here is a 448-residue protein sequence, read N- to C-terminus: DNA repair protein RadA (448 aa).

A C4-type zinc finger spans residues 10–27 (CSNCGNTSPKWSGQCFDC). 91 to 98 (GDPGIGKS) contributes to the ATP binding site. The RadA KNRFG motif motif lies at 250-254 (KNRFG). Residues 349–448 (EVYLSIAGGL…KDLKLLLGSS (100 aa)) are lon-protease-like.

This sequence belongs to the RecA family. RadA subfamily.

Functionally, DNA-dependent ATPase involved in processing of recombination intermediates, plays a role in repairing DNA breaks. Stimulates the branch migration of RecA-mediated strand transfer reactions, allowing the 3' invading strand to extend heteroduplex DNA faster. Binds ssDNA in the presence of ADP but not other nucleotides, has ATPase activity that is stimulated by ssDNA and various branched DNA structures, but inhibited by SSB. Does not have RecA's homology-searching function. The chain is DNA repair protein RadA from Rickettsia bellii (strain RML369-C).